Here is a 769-residue protein sequence, read N- to C-terminus: Zinc finger protein 585B (769 aa).

Residues 1–12 are compositionally biased toward polar residues; it reads MPASWTSPQKSS. A disordered region spans residues 1–23; sequence MPASWTSPQKSSALAPDDHGSSY. The KRAB domain occupies 27–97; it reads VSFRDVVINF…QGERPRHSCP (71 aa). C2H2-type zinc fingers lie at residues 158-180, 186-208, 214-236, 242-264, 270-292, 298-320, 354-376, 382-404, 410-432, 438-460, 466-488, 494-516, 522-544, 550-572, 578-600, 606-628, 634-656, 662-684, 690-712, 718-740, and 746-768; these read YVCIECGRAFVQKPEFITHQKAH, YKCNECGKSVFQVSSLFRHQRIH, YQCSECGKGFPYNSDLSIHEKIH, HECTDCGKAFTQRSTLKMHQKIH, YICIECGQAFIQKTQLIAHRRIH, YECNNCGKSFISKSQLEVHQRIH, SICTECGKAFTYRSELIIHQRIH, YACSDCGKAFTQKSTLTVHQRIH, YVCMKCGLAFIRKAHLVTHQIIH, YKCGHCGKLFTSKSQLHVHKRIH, YVCNKCGKAFTNRSDLITHQKTH, YICSKCGKAFTQRSDLITHQRIH, YECNTCGKAFTQKSNLNIHQKIH, YECHECGKAFNQKSILIVHQKIH, YVCTECGRAFIRKSNFITHQRIH, YECSDCGKSFTSKSQLLVHQPLH, YVCAECGKAFSGRSNLSKHQKTH, YICSECGKTFRQKSELITHHRIH, YECSDCGKSFTKKSQLQVHQRIH, YVCAECGKAFSNRSNLNKHQTTH, and YKCGICGKGFVQKSVFSVHQGSH.

The protein belongs to the krueppel C2H2-type zinc-finger protein family.

It is found in the nucleus. May be involved in transcriptional regulation. The polypeptide is Zinc finger protein 585B (ZNF585B) (Pongo abelii (Sumatran orangutan)).